Reading from the N-terminus, the 228-residue chain is Putative adhesin RBE_1271 (228 aa).

The N-terminal stretch at 1 to 22 (MKKLLLIAATSATVLSSALSFA) is a signal peptide.

The chain is Putative adhesin RBE_1271 from Rickettsia bellii (strain RML369-C).